Consider the following 533-residue polypeptide: MSSLVSEIARRRTFAIISHPDAGKTTLTEKLLWFGGAIQVAGEVRARKADRHATSDWMELEKQRGISVTSSVMQFPYSRESADGKAQENIVNLLDTPGHEDFSEDTYRTLTAVDSAVMVIDSVNGVEAQTIKLLNVCRLRDTPILTFINKLDREGRSPIELLDEIEDVLQIQCAPMTWPIGMGKAFRGVYHLIDDKVQLFDPHGDKGTAAILDGLDNPELDRILGSQAEELRIEIELVRGASHTFDKAAFLNGKQTPVYFGSAINNFGVQSLLDALCELSPPPLARNTESRVVEPQEPKFTGFVFKIQANMDPRHRDRIAFVRVCSGRFERGMKLLHVSAGKTVAINNAITFMAQDRNTTEEAYAGDIIGVPNHGTIRLGDVFTEGEPLKFTGIPSFAPEFFRRARLNNPLKVKQLQKGLQQLAEEGATQMFRPLASNDLVLGAVGILQFDVVAHRLEHEYGVDAIFESHECATARWLKGTPAEIEKLIAKAGHNVALDGAGDHVYLAPSMVNLRLTQERFPELQFLETREIV.

The tr-type G domain maps to 9–284; it reads ARRRTFAIIS…ALCELSPPPL (276 aa). GTP-binding positions include 18–25, 95–99, and 149–152; these read SHPDAGKT, DTPGH, and NKLD.

The protein belongs to the TRAFAC class translation factor GTPase superfamily. Classic translation factor GTPase family. PrfC subfamily.

Its subcellular location is the cytoplasm. Functionally, increases the formation of ribosomal termination complexes and stimulates activities of RF-1 and RF-2. It binds guanine nucleotides and has strong preference for UGA stop codons. It may interact directly with the ribosome. The stimulation of RF-1 and RF-2 is significantly reduced by GTP and GDP, but not by GMP. The polypeptide is Peptide chain release factor 3 (Cupriavidus taiwanensis (strain DSM 17343 / BCRC 17206 / CCUG 44338 / CIP 107171 / LMG 19424 / R1) (Ralstonia taiwanensis (strain LMG 19424))).